The sequence spans 130 residues: Large ribosomal subunit protein bL12 (130 aa).

It belongs to the bacterial ribosomal protein bL12 family. In terms of assembly, homodimer. Part of the ribosomal stalk of the 50S ribosomal subunit. Forms a multimeric L10(L12)X complex, where L10 forms an elongated spine to which 2 to 4 L12 dimers bind in a sequential fashion. Binds GTP-bound translation factors.

Its function is as follows. Forms part of the ribosomal stalk which helps the ribosome interact with GTP-bound translation factors. Is thus essential for accurate translation. This chain is Large ribosomal subunit protein bL12, found in Herpetosiphon aurantiacus (strain ATCC 23779 / DSM 785 / 114-95).